Consider the following 231-residue polypeptide: LexA repressor (231 aa).

A DNA-binding region (H-T-H motif) is located at residues 26–46 (FDEMKDALDLRSKSGIHRLIT). Active-site for autocatalytic cleavage activity residues include Ser152 and Lys190.

This sequence belongs to the peptidase S24 family. In terms of assembly, homodimer.

The catalysed reaction is Hydrolysis of Ala-|-Gly bond in repressor LexA.. Represses a number of genes involved in the response to DNA damage (SOS response), including recA and lexA. In the presence of single-stranded DNA, RecA interacts with LexA causing an autocatalytic cleavage which disrupts the DNA-binding part of LexA, leading to derepression of the SOS regulon and eventually DNA repair. This chain is LexA repressor, found in Dinoroseobacter shibae (strain DSM 16493 / NCIMB 14021 / DFL 12).